A 448-amino-acid polypeptide reads, in one-letter code: MAVEQNIAPAKLIDRFSHDGPGKCRTSEWRFEVPLNHSKPDEGTVRLFARSIHCVLGVDDPELPWMLYLQGGPGLGCKTPLEYAWLPSILEKGYRVLFLDERGTGQSSPITAKTLAQQGDHKKQADLLKRFRADNIVRDCEAVRKHLYQDAPADQSKWSVMAASFGGFCAISYVSMFPNSLVEVFIGGGPCPMVNEPGQVIPRLFAVAARRNEVYYKKYPEDVGRVKRIIKYLKENKVALSKGTLTPERFQQLGVMLGLHGGIDYIHGVVQRTDNDLDMFKFLTAPTLDLIENSGMAHNVIYSLLQEPMYCQGKAGGWCADKCRKADPRFSLNERNAQIWFTGEAIFSDMFESYDELKDLKPVAELLARSSDWGQLYNEAQLARNEVPVYVATAVEDMYVSYDLGCHTASKVKNLQQVVNNTWYHDAVETKASEVMPALFALKEDRID.

An AB hydrolase-1 domain is found at 64–191 (PWMLYLQGGP…VEVFIGGGPC (128 aa)). S164 (nucleophile) is an active-site residue. Residue D397 is part of the active site. Residue H425 is the Proton donor of the active site.

This sequence belongs to the peptidase S33 family. Homooligomer.

It localises to the cytoplasm. It carries out the reaction Release of N-terminal proline from a peptide.. It functions in the pathway secondary metabolite biosynthesis. Proline iminopeptidase; part of the gene cluster that mediates the biosynthesis of aculenes, a unique type of norsesquiterpenes that contain a nordaucane skeleton linked to an L-proline moiety and are of mixed biosynthetic origin. The pathway begins with the synthesis of dauca-4,7-diene by the terpene cyclase aneC using farnesyl pyrophosphate (FPP) as substrate. The cytochrome P450 monooxygenase aneF then performs the initial oxidation at C-12 of dauca-4,7-diene to yield asperaculane D. Asperaculane D is substrate of the cytochrome P450 monooxygenase aneD for C-10 hydroxylation to yield asperaculane E. The cytochrome P450 monooxygenase aneG then converts asperaculane E into aculene D via C-2 oxidation. The monomodular nonribosomal peptide synthtase aneB adenylates L-proline and the thiohydrolase aneE transfers this activated L-proline derivative to aculenes D and C to produce respectively aculenes B and A. The dioxygenase aneA converts aculene D into aculene C, and aculene B into aculene A by introducing the 5,6-alkene moiety. Asperculanes A, B, C and F, as well as 14-prolyl asperculane C, might be shunt products of the pathway. The sequence is that of Proline iminopeptidase aneH from Aspergillus aculeatus (strain ATCC 16872 / CBS 172.66 / WB 5094).